A 40-amino-acid polypeptide reads, in one-letter code: Hemoglobin subunit alpha-2 (40 aa).

The Globin domain occupies 1 to 40 (VGPHLDDYGGEALHRNFEVYPQTKTYFPHFDASAGSNQLK).

The protein belongs to the globin family. As to quaternary structure, heterotetramer of two alpha chains and two beta chains. Red blood cells.

In terms of biological role, involved in oxygen transport from the lung to the various peripheral tissues. The chain is Hemoglobin subunit alpha-2 from Saara hardwickii (Indian spiny-tailed lizard).